The sequence spans 493 residues: Cytochrome P450 2W1 (493 aa).

An N-terminal signal peptide occupies residues methionine 1–glycine 23. Asparagine 180 carries an N-linked (GlcNAc...) asparagine glycan. Cysteine 436 lines the heme pocket.

This sequence belongs to the cytochrome P450 family. It depends on heme as a cofactor. As to expression, detected in colon, ileum, and testes.

It localises to the endoplasmic reticulum lumen. Its subcellular location is the cell membrane. It is found in the microsome membrane. The catalysed reaction is all-trans-retinoate + reduced [NADPH--hemoprotein reductase] + O2 = all-trans-4-hydroxyretinoate + oxidized [NADPH--hemoprotein reductase] + H2O + H(+). It catalyses the reaction 1-(9Z-octadecenoyl)-sn-glycero-3-phosphocholine + reduced [NADPH--hemoprotein reductase] + O2 = 1-[8-hydroxy-(9Z)-octadecenoyl]-sn-glycero-3-phosphocholine + oxidized [NADPH--hemoprotein reductase] + H2O + H(+). It carries out the reaction 1-(9Z-octadecenoyl)-sn-glycero-3-phosphocholine + reduced [NADPH--hemoprotein reductase] + O2 = 1-[11-hydroxy-(9Z)-octadecenoyl]-sn-glycero-3-phosphocholine + oxidized [NADPH--hemoprotein reductase] + H2O + H(+). The enzyme catalyses 1-(9Z-octadecenoyl)-sn-glycero-3-phosphocholine + reduced [NADPH--hemoprotein reductase] + O2 = 1-[(9S,10R)-epoxy-octadecanoyl]-sn-glycero-3-phosphocholine + oxidized [NADPH--hemoprotein reductase] + H2O + H(+). The catalysed reaction is 1-(9Z-octadecenoyl)-sn-glycero-3-phosphocholine + reduced [NADPH--hemoprotein reductase] + O2 = 1-[(9R,10S)-epoxy-octadecanoyl]-sn-glycero-3-phosphocholine + oxidized [NADPH--hemoprotein reductase] + H2O + H(+). Its function is as follows. A cytochrome P450 monooxygenase that may play a role in retinoid and phospholipid metabolism. Catalyzes the hydroxylation of saturated carbon hydrogen bonds. Hydroxylates all trans-retinoic acid (atRA) to 4-hydroxyretinoate and may regulate atRA clearance. Other retinoids such as all-trans retinol and all-trans retinal are potential endogenous substrates. Catalyzes both epoxidation of double bonds and hydroxylation of carbon hydrogen bonds of the fatty acyl chain of 1-acylphospholipids/2-lysophospholipids. Can metabolize various lysophospholipids classes including lysophosphatidylcholines (LPCs), lysophosphatidylinositols (LPIs), lysophosphatidylserines (LPSs), lysophosphatidylglycerols (LPGs), lysophosphatidylethanolamines (LPEs) and lysophosphatidic acids (LPAs). Has low or no activity toward 2-acylphospholipids/1-lysophospholipids, diacylphospholipids and free fatty acids. May play a role in tumorigenesis by activating procarcinogens such as aflatoxin B1, polycyclic aromatic hydrocarbon dihydrodiols and aromatic amines. Mechanistically, uses molecular oxygen inserting one oxygen atom into a substrate, and reducing the second into a water molecule, with two electrons provided by NADPH via cytochrome P450 reductase (CPR; NADPH-ferrihemoprotein reductase). This is Cytochrome P450 2W1 (Cyp2w1) from Mus musculus (Mouse).